Reading from the N-terminus, the 471-residue chain is Trehalose-binding lipoprotein LpqY (471 aa).

Residues 1 to 28 (MDGRQVVRARRWCATAAVALMTASTVAA) form the signal peptide. The N-palmitoyl cysteine moiety is linked to residue C29. C29 carries the S-diacylglycerol cysteine lipid modification. Residues N45, E46, Q79, D100, N154, Y198, W279, Y281, G354, and R424 each coordinate alpha,alpha-trehalose. C57 and C375 are joined by a disulfide.

It belongs to the bacterial solute-binding protein 1 family. Monomer. The complex is composed of two ATP-binding proteins (SugC), two transmembrane proteins (SugA and SugB) and a solute-binding protein (LpqY).

The protein resides in the cell inner membrane. Functionally, part of the ABC transporter complex LpqY-SugA-SugB-SugC, which is highly specific for uptake of trehalose. Involved in the recycling of extracellular trehalose released from trehalose-containing molecules synthesized by M.thermoresistibile. Trehalose uptake is essential for virulence. Binds deuterated trehalose with similar high affinity to trehalose, trehalose analogs including galactotrehalose, 4-azido-4-deoxy-trehalose, 6-azido-6-deoxy-trehalose, 3-azido-3-deoxy-trehalose and mannotrehalose in the order of decreasing affinity, respectively, and 2-azido-2-deoxy-trehalose and kojibiose (alpha1,2-glycosidic bond) with very low affinity. Does not recognize single glucose, 6-amino-6-deoxy-trehalose, trehalose-6-phosphate, nigerose (alpha1,3-glycosidic bond), maltose (alpha1,4-glycosidic bond), isomaltose (alpha1,6-glycosidic bond) or glycerophosphocholine. Decreased recognition of alpha,beta-trehalose and almost no recognition of beta,beta-trehalose. Substrate specificity indicates a strict requirement for an alpha1,1-linked disaccharide. In Mycolicibacterium thermoresistibile (strain ATCC 19527 / DSM 44167 / CIP 105390 / JCM 6362 / NCTC 10409 / 316) (Mycobacterium thermoresistibile), this protein is Trehalose-binding lipoprotein LpqY.